The following is a 187-amino-acid chain: UPF0301 protein YqgE (187 aa).

This sequence belongs to the UPF0301 (AlgH) family.

In Salmonella paratyphi A (strain ATCC 9150 / SARB42), this protein is UPF0301 protein YqgE.